The chain runs to 425 residues: Serine--tRNA ligase (425 aa).

Residue Thr-230–Glu-232 coordinates L-serine. Arg-261 to Glu-263 contributes to the ATP binding site. Position 284 (Glu-284) interacts with L-serine. Glu-348–Ser-351 lines the ATP pocket. Ser-385 lines the L-serine pocket.

It belongs to the class-II aminoacyl-tRNA synthetase family. Type-1 seryl-tRNA synthetase subfamily. In terms of assembly, homodimer. The tRNA molecule binds across the dimer.

It localises to the cytoplasm. It carries out the reaction tRNA(Ser) + L-serine + ATP = L-seryl-tRNA(Ser) + AMP + diphosphate + H(+). It catalyses the reaction tRNA(Sec) + L-serine + ATP = L-seryl-tRNA(Sec) + AMP + diphosphate + H(+). It functions in the pathway aminoacyl-tRNA biosynthesis; selenocysteinyl-tRNA(Sec) biosynthesis; L-seryl-tRNA(Sec) from L-serine and tRNA(Sec): step 1/1. Functionally, catalyzes the attachment of serine to tRNA(Ser). Is also able to aminoacylate tRNA(Sec) with serine, to form the misacylated tRNA L-seryl-tRNA(Sec), which will be further converted into selenocysteinyl-tRNA(Sec). In Wolbachia sp. subsp. Brugia malayi (strain TRS), this protein is Serine--tRNA ligase.